The primary structure comprises 115 residues: Beta-2-microglobulin (115 aa).

The N-terminal stretch at 1-18 (MGLLICSLLLGLLCCSMA) is a signal peptide. One can recognise an Ig-like C1-type domain in the interval 23–114 (PKVEVYTREP…KSKDHFLMIG (92 aa)).

It belongs to the beta-2-microglobulin family. Heterodimer of an alpha chain and a beta chain. Beta-2-microglobulin is the beta-chain of major histocompatibility complex class I molecules.

Its subcellular location is the secreted. Its function is as follows. Component of the class I major histocompatibility complex (MHC). Involved in the presentation of peptide antigens to the immune system. This is Beta-2-microglobulin (b2m) from Paralichthys olivaceus (Bastard halibut).